Here is a 1031-residue protein sequence, read N- to C-terminus: GTPase-activating protein DDB_G0291510 (1031 aa).

The segment at 18–48 (VEKGDIDENNSGSINNRPLSPTLFSSNSSNN) is disordered. Polar residues predominate over residues 26–41 (NNSGSINNRPLSPTLF). The Rap-GAP domain maps to 186-404 (FKDLEQTQTE…RTFKDQLESI (219 aa)). The region spanning 471 to 881 (NEKINCLDVV…LSNDDCNLDN (411 aa)) is the CNH domain. The interval 920–950 (NNNYNNNGNNSNGGNNNNNNNNNNGCNNSLI) is disordered.

The protein is GTPase-activating protein DDB_G0291510 of Dictyostelium discoideum (Social amoeba).